Here is a 788-residue protein sequence, read N- to C-terminus: Probable potassium transporter 9 (788 aa).

Residues 1 to 21 (MDPEFGRGMAPRKREPWRTTL) are Cytoplasmic-facing. Residues 22-42 (LLAYQSLGVVYGDLSISPLYV) form a helical membrane-spanning segment. Residues 43-59 (YKSTFAEDITHSESNEE) lie on the Extracellular side of the membrane. The chain crosses the membrane as a helical span at residues 60–80 (IFGVLSFVFWTLTLIPLIKYV). Over 81–151 (SIVLRADDNG…EKHKTLQTAL (71 aa)) the chain is Cytoplasmic. A helical membrane pass occupies residues 152–172 (LIMVMIGTCMVIGDGVLTPAI). Topologically, residues 173–191 (SVFSAVSGLELSLSRDQHE) are extracellular. Residues 192-212 (YAVIPITCVILVFLFALQHYG) form a helical membrane-spanning segment. The Cytoplasmic portion of the chain corresponds to 213-215 (THR). A helical transmembrane segment spans residues 216–236 (VGFLFAPIVLAWLICMSMLGL). Residues 237–264 (YNIIHWNPQVYRALNPYYMLKFLRKTKK) are Extracellular-facing. A helical transmembrane segment spans residues 265 to 285 (SGWMSLGGILLCMTGSEAMFA). Topologically, residues 286–292 (DLGHFSY) are cytoplasmic. A helical transmembrane segment spans residues 293–313 (SAIQLAFTTLVYPALILGYMG). Over 314 to 343 (QAAYLSKHHTLNSTYQIGYYISVPESVRWP) the chain is Extracellular. Asparagine 325 carries an N-linked (GlcNAc...) asparagine glycan. A helical membrane pass occupies residues 344–364 (VLVLAILASVVGSQAIISGTF). The Cytoplasmic segment spans residues 365-391 (SIINQSQSLSCFPRVKVVHTSENIHGQ). A helical membrane pass occupies residues 392 to 412 (IYIPEINWLLMVLCIAVTVGF). Residues 413 to 422 (RDTKHMGNAS) are Extracellular-facing. Asparagine 420 carries N-linked (GlcNAc...) asparagine glycosylation. The chain crosses the membrane as a helical span at residues 423 to 443 (GLAVITVMLVTTCLTSLVIML). Over 444–451 (CWHRSPAL) the chain is Cytoplasmic. A helical membrane pass occupies residues 452–472 (ALVFFLFFGSIEVLYFSASLI). Over 473-476 (KFRE) the chain is Extracellular. Residues 477–497 (GAWLPIMLALILMAVMFIWHH) form a helical membrane-spanning segment. The Cytoplasmic segment spans residues 498–788 (TTIKKYEFDL…LLEVGMVYVL (291 aa)).

The protein belongs to the HAK/KUP transporter (TC 2.A.72.3) family.

Its subcellular location is the membrane. In terms of biological role, high-affinity potassium transporter. This chain is Probable potassium transporter 9 (HAK9), found in Oryza sativa subsp. japonica (Rice).